The chain runs to 549 residues: Glucose-6-phosphate isomerase (549 aa).

3 positions are modified to N6-acetyllysine: Lys-80, Lys-228, and Lys-234. Catalysis depends on Glu-355, which acts as the Proton donor. Active-site residues include His-386 and Lys-514.

This sequence belongs to the GPI family.

The protein localises to the cytoplasm. It catalyses the reaction alpha-D-glucose 6-phosphate = beta-D-fructose 6-phosphate. It functions in the pathway carbohydrate biosynthesis; gluconeogenesis. The protein operates within carbohydrate degradation; glycolysis; D-glyceraldehyde 3-phosphate and glycerone phosphate from D-glucose: step 2/4. Catalyzes the reversible isomerization of glucose-6-phosphate to fructose-6-phosphate. The polypeptide is Glucose-6-phosphate isomerase (Shigella boydii serotype 4 (strain Sb227)).